Consider the following 183-residue polypeptide: MVIDNFNIFTIISNAKTFGINTNVFETNIINLAIVVGTLFYYGKLTLSDLLKTRKKTIIKNILDIDEKIRSSQSSLYLAELEFENAAKKASLIRSNGTTFCLKSFDIIRSSVNEDIKRLKQSKRLILRTEDKKSVREIFKNLYSQACQKAKATIIKRLNSKIHKKIILKKMEKMSLKKLKPKY.

A helical transmembrane segment spans residues 20–42 (INTNVFETNIINLAIVVGTLFYY).

It belongs to the ATPase B chain family. As to quaternary structure, F-type ATPases have 2 components, F(1) - the catalytic core - and F(0) - the membrane proton channel. F(1) has five subunits: alpha(3), beta(3), gamma(1), delta(1), epsilon(1). F(0) has four main subunits: a(1), b(1), b'(1) and c(10-14). The alpha and beta chains form an alternating ring which encloses part of the gamma chain. F(1) is attached to F(0) by a central stalk formed by the gamma and epsilon chains, while a peripheral stalk is formed by the delta, b and b' chains.

It localises to the plastid. Its subcellular location is the chloroplast thylakoid membrane. Functionally, f(1)F(0) ATP synthase produces ATP from ADP in the presence of a proton or sodium gradient. F-type ATPases consist of two structural domains, F(1) containing the extramembraneous catalytic core and F(0) containing the membrane proton channel, linked together by a central stalk and a peripheral stalk. During catalysis, ATP synthesis in the catalytic domain of F(1) is coupled via a rotary mechanism of the central stalk subunits to proton translocation. Its function is as follows. Component of the F(0) channel, it forms part of the peripheral stalk, linking F(1) to F(0). This Euglena gracilis protein is ATP synthase subunit b, chloroplastic.